The sequence spans 209 residues: Uracil phosphoribosyltransferase (209 aa).

Residues R79, R104, and 131-139 (DPMLATGGS) contribute to the 5-phospho-alpha-D-ribose 1-diphosphate site. Uracil is bound by residues I194 and 199 to 201 (GDA). 5-phospho-alpha-D-ribose 1-diphosphate is bound at residue D200.

Belongs to the UPRTase family. It depends on Mg(2+) as a cofactor.

It catalyses the reaction UMP + diphosphate = 5-phospho-alpha-D-ribose 1-diphosphate + uracil. It functions in the pathway pyrimidine metabolism; UMP biosynthesis via salvage pathway; UMP from uracil: step 1/1. With respect to regulation, allosterically activated by GTP. Functionally, catalyzes the conversion of uracil and 5-phospho-alpha-D-ribose 1-diphosphate (PRPP) to UMP and diphosphate. This is Uracil phosphoribosyltransferase from Oceanobacillus iheyensis (strain DSM 14371 / CIP 107618 / JCM 11309 / KCTC 3954 / HTE831).